The primary structure comprises 454 residues: Nuclear distribution protein PAC1-1 (454 aa).

Positions Gln-9 to Glu-41 constitute a LisH domain. A disordered region spans residues Arg-71 to Leu-93. Positions Thr-73 to Arg-84 are enriched in polar residues. WD repeat units lie at residues Ser-104 to Lys-145, His-147 to Arg-187, Gly-191 to Thr-236, Gly-239 to Lys-278, Gly-283 to Leu-342, Gly-344 to Lys-383, and Ala-388 to Arg-450.

This sequence belongs to the WD repeat LIS1/nudF family. In terms of assembly, self-associates. Interacts with NDL1 and dynein.

Its subcellular location is the cytoplasm. It localises to the cytoskeleton. It is found in the spindle pole. In terms of biological role, positively regulates the activity of the minus-end directed microtubule motor protein dynein. May enhance dynein-mediated microtubule sliding by targeting dynein to the microtubule plus end. Required for nuclear migration during vegetative growth as well as development. Required for retrograde early endosome (EE) transport from the hyphal tip. Required for localization of dynein to the mitotic spindle poles. Recruits additional proteins to the dynein complex at SPBs. The chain is Nuclear distribution protein PAC1-1 from Chaetomium globosum (strain ATCC 6205 / CBS 148.51 / DSM 1962 / NBRC 6347 / NRRL 1970) (Soil fungus).